A 227-amino-acid chain; its full sequence is MTAIAPVITIDGPSGAGKGTLCKAMAEALQWHLLDSGAIYRVLALAALHHHVDVASEDALVPLASHLDVRFISTNGNLEVILEGEDVSGEIRTQEVANAASQVAAFPRVREALLRRQRAFRELPGLIADGRDMGTVVFPDAPVKIFLDASSEERAHRRMLQLQEKGFSVNFERLLAEIKERDDRDRNRAVAPLVPAADALVLDSTTLSIEQVIEKALQYARQKLALA.

12–20 lines the ATP pocket; sequence GPSGAGKGT.

The protein belongs to the cytidylate kinase family. Type 1 subfamily.

Its subcellular location is the cytoplasm. The catalysed reaction is CMP + ATP = CDP + ADP. It carries out the reaction dCMP + ATP = dCDP + ADP. This chain is Cytidylate kinase, found in Escherichia fergusonii (strain ATCC 35469 / DSM 13698 / CCUG 18766 / IAM 14443 / JCM 21226 / LMG 7866 / NBRC 102419 / NCTC 12128 / CDC 0568-73).